A 701-amino-acid chain; its full sequence is Acetyl-coenzyme A synthetase, cytoplasmic (701 aa).

Positions 1 to 26 are enriched in basic and acidic residues; that stretch reads MGLPEERRKSGSGSRAREETGAEGRV. Residues 1-37 form a disordered region; sequence MGLPEERRKSGSGSRAREETGAEGRVRGWSPPPEVRR. Residues 1-107 are interaction with TFEB; the sequence is MGLPEERRKS…GATTNICYNV (107 aa). Ser30 is subject to Phosphoserine. 219 to 222 provides a ligand contact to CoA; it reads RGEK. A phosphoserine mark is found at Ser263, Ser265, and Ser267. Thr363 serves as a coordination point for CoA. The residue at position 418 (Lys418) is an N6-acetyllysine. ATP-binding positions include 439 to 441, 463 to 468, Asp552, and Arg567; these read GEP and DTFWQT. CoA is bound by residues Ser575 and Arg636. The Nuclear localization signal motif lies at 656–668; the sequence is KTRSGKIMRRVLR. Ser659 is subject to Phosphoserine; by AMPK. At Lys661 the chain carries N6-acetyllysine.

This sequence belongs to the ATP-dependent AMP-binding enzyme family. Monomer. Interacts with TFEB. AMPK-mediated phosphorylated form at Ser-659 interacts with KPNA1; this interaction results in nuclear translocation of ACSS2. Interacts with the 'Thr-172' phosphorylated form of PRKAA2. Interacts with CREBBP. Post-translationally, reversibly acetylated at Lys-661. The acetyl-CoA synthase activity is inhibited by acetylation and activated by deacetylation mediated by the deacetylases SIRT1 and SIRT3. In terms of tissue distribution, expressed in the hippocampus.

The protein localises to the cytoplasm. It localises to the cytosol. The protein resides in the nucleus. The catalysed reaction is acetate + ATP + CoA = acetyl-CoA + AMP + diphosphate. It carries out the reaction propanoate + ATP + CoA = propanoyl-CoA + AMP + diphosphate. With respect to regulation, inhibited by acetylation at Lys-661 and activated by deacetylation mediated by the deacetylases SIRT1 and SIRT3. Catalyzes the synthesis of acetyl-CoA from short-chain fatty acids. Acetate is the preferred substrate but can also utilize propionate with a much lower affinity. Nuclear ACSS2 promotes glucose deprivation-induced lysosomal biogenesis and autophagy, tumor cell survival and brain tumorigenesis. Glucose deprivation results in AMPK-mediated phosphorylation of ACSS2 leading to its translocation to the nucleus where it binds to TFEB and locally produces acetyl-CoA for histone acetylation in the promoter regions of TFEB target genes thereby activating their transcription. The regulation of genes associated with autophagy and lysosomal activity through ACSS2 is important for brain tumorigenesis and tumor survival. Acts as a chromatin-bound transcriptional coactivator that up-regulates histone acetylation and expression of neuronal genes. Can be recruited to the loci of memory-related neuronal genes to maintain a local acetyl-CoA pool, providing the substrate for histone acetylation and promoting the expression of specific genes, which is essential for maintaining long-term spatial memory. The chain is Acetyl-coenzyme A synthetase, cytoplasmic (Acss2) from Mus musculus (Mouse).